The chain runs to 141 residues: Nucleoside diphosphate kinase (141 aa).

6 residues coordinate ATP: lysine 11, phenylalanine 59, arginine 87, threonine 93, arginine 104, and asparagine 114. Histidine 117 acts as the Pros-phosphohistidine intermediate in catalysis.

This sequence belongs to the NDK family. Homotetramer. Mg(2+) is required as a cofactor.

Its subcellular location is the cytoplasm. It carries out the reaction a 2'-deoxyribonucleoside 5'-diphosphate + ATP = a 2'-deoxyribonucleoside 5'-triphosphate + ADP. It catalyses the reaction a ribonucleoside 5'-diphosphate + ATP = a ribonucleoside 5'-triphosphate + ADP. Functionally, major role in the synthesis of nucleoside triphosphates other than ATP. The ATP gamma phosphate is transferred to the NDP beta phosphate via a ping-pong mechanism, using a phosphorylated active-site intermediate. This is Nucleoside diphosphate kinase from Hamiltonella defensa subsp. Acyrthosiphon pisum (strain 5AT).